Reading from the N-terminus, the 349-residue chain is Phenylalanine--tRNA ligase alpha subunit (349 aa).

Glu-264 is a binding site for Mg(2+).

Belongs to the class-II aminoacyl-tRNA synthetase family. Phe-tRNA synthetase alpha subunit type 1 subfamily. Tetramer of two alpha and two beta subunits. It depends on Mg(2+) as a cofactor.

The protein localises to the cytoplasm. The catalysed reaction is tRNA(Phe) + L-phenylalanine + ATP = L-phenylalanyl-tRNA(Phe) + AMP + diphosphate + H(+). The protein is Phenylalanine--tRNA ligase alpha subunit of Myxococcus xanthus (strain DK1622).